A 435-amino-acid polypeptide reads, in one-letter code: Probable exopolygalacturonase B (435 aa).

Residues 1–15 form the signal peptide; sequence MKFFTAALFASAVSA. Asparagine 59, asparagine 184, and asparagine 224 each carry an N-linked (GlcNAc...) asparagine glycan. The active-site Proton donor is the aspartate 254. The cysteines at positions 256 and 273 are disulfide-linked. Residues asparagine 262 and asparagine 274 are each glycosylated (N-linked (GlcNAc...) asparagine). The active site involves histidine 277. Asparagine 301, asparagine 328, asparagine 365, and asparagine 368 each carry an N-linked (GlcNAc...) asparagine glycan. An intrachain disulfide couples cysteine 391 to cysteine 397.

Belongs to the glycosyl hydrolase 28 family.

Its subcellular location is the secreted. It catalyses the reaction [(1-&gt;4)-alpha-D-galacturonosyl](n) + H2O = alpha-D-galacturonate + [(1-&gt;4)-alpha-D-galacturonosyl](n-1). Functionally, specific in hydrolyzing the terminal glycosidic bond of polygalacturonic acid and oligogalacturonates. The polypeptide is Probable exopolygalacturonase B (pgxB) (Aspergillus terreus (strain NIH 2624 / FGSC A1156)).